The following is a 72-amino-acid chain: Protein RALF-like 12 (72 aa).

The signal sequence occupies residues 1 to 17 (MKAWVIGLLVICAVVIA). 2 disulfides stabilise this stretch: Cys34/Cys43 and Cys63/Cys69. The segment at 37-60 (PNPPPGCNPPGTEQKNPTPVNEYS) is disordered.

This sequence belongs to the plant rapid alkalinization factor (RALF) family.

It is found in the secreted. Its function is as follows. Cell signaling peptide that may regulate plant stress, growth, and development. Mediates a rapid alkalinization of extracellular space by mediating a transient increase in the cytoplasmic Ca(2+) concentration leading to a calcium-dependent signaling events through a cell surface receptor and a concomitant activation of some intracellular mitogen-activated protein kinases. In Arabidopsis thaliana (Mouse-ear cress), this protein is Protein RALF-like 12 (RALFL12).